We begin with the raw amino-acid sequence, 660 residues long: Bifunctional polymyxin resistance protein ArnA (660 aa).

The segment at 1 to 304 is formyltransferase ArnAFT; sequence MKTVVFAYHD…MLGLVQGSRL (304 aa). 86-88 is a (6R)-10-formyltetrahydrofolate binding site; sequence HLI. His-104 functions as the Proton donor; for formyltransferase activity in the catalytic mechanism. (6R)-10-formyltetrahydrofolate contacts are provided by residues Arg-114 and 136 to 140; that span reads VKRAD. Residues 314–660 form a dehydrogenase ArnADH region; the sequence is RRTRVLILGV…RTVDLTDKPS (347 aa). NAD(+) is bound by residues Asp-347 and 368–369; that span reads DI. UDP-alpha-D-glucuronate is bound by residues Ala-393, Tyr-398, and 432–433; that span reads TS. Glu-434 acts as the Proton acceptor; for decarboxylase activity in catalysis. Residues Arg-460, Asn-492, 526–535, and Tyr-613 contribute to the UDP-alpha-D-glucuronate site; that span reads KLIDGGKQKR. The active-site Proton donor; for decarboxylase activity is Arg-619.

This sequence in the N-terminal section; belongs to the Fmt family. UDP-L-Ara4N formyltransferase subfamily. In the C-terminal section; belongs to the NAD(P)-dependent epimerase/dehydratase family. UDP-glucuronic acid decarboxylase subfamily. Homohexamer, formed by a dimer of trimers.

It carries out the reaction UDP-alpha-D-glucuronate + NAD(+) = UDP-beta-L-threo-pentopyranos-4-ulose + CO2 + NADH. It catalyses the reaction UDP-4-amino-4-deoxy-beta-L-arabinose + (6R)-10-formyltetrahydrofolate = UDP-4-deoxy-4-formamido-beta-L-arabinose + (6S)-5,6,7,8-tetrahydrofolate + H(+). It functions in the pathway nucleotide-sugar biosynthesis; UDP-4-deoxy-4-formamido-beta-L-arabinose biosynthesis; UDP-4-deoxy-4-formamido-beta-L-arabinose from UDP-alpha-D-glucuronate: step 1/3. Its pathway is nucleotide-sugar biosynthesis; UDP-4-deoxy-4-formamido-beta-L-arabinose biosynthesis; UDP-4-deoxy-4-formamido-beta-L-arabinose from UDP-alpha-D-glucuronate: step 3/3. It participates in bacterial outer membrane biogenesis; lipopolysaccharide biosynthesis. Functionally, bifunctional enzyme that catalyzes the oxidative decarboxylation of UDP-glucuronic acid (UDP-GlcUA) to UDP-4-keto-arabinose (UDP-Ara4O) and the addition of a formyl group to UDP-4-amino-4-deoxy-L-arabinose (UDP-L-Ara4N) to form UDP-L-4-formamido-arabinose (UDP-L-Ara4FN). The modified arabinose is attached to lipid A and is required for resistance to polymyxin and cationic antimicrobial peptides. The chain is Bifunctional polymyxin resistance protein ArnA from Shigella flexneri serotype 5b (strain 8401).